The primary structure comprises 102 residues: Small ribosomal subunit protein uS10 (102 aa).

This sequence belongs to the universal ribosomal protein uS10 family. In terms of assembly, part of the 30S ribosomal subunit.

Its function is as follows. Involved in the binding of tRNA to the ribosomes. In Akkermansia muciniphila (strain ATCC BAA-835 / DSM 22959 / JCM 33894 / BCRC 81048 / CCUG 64013 / CIP 107961 / Muc), this protein is Small ribosomal subunit protein uS10.